The primary structure comprises 336 residues: Nicotinate-nucleotide--dimethylbenzimidazole phosphoribosyltransferase (336 aa).

The active-site Proton acceptor is glutamate 304.

Belongs to the CobT family.

It carries out the reaction 5,6-dimethylbenzimidazole + nicotinate beta-D-ribonucleotide = alpha-ribazole 5'-phosphate + nicotinate + H(+). It participates in nucleoside biosynthesis; alpha-ribazole biosynthesis; alpha-ribazole from 5,6-dimethylbenzimidazole: step 1/2. Its function is as follows. Catalyzes the synthesis of alpha-ribazole-5'-phosphate from nicotinate mononucleotide (NAMN) and 5,6-dimethylbenzimidazole (DMB). The protein is Nicotinate-nucleotide--dimethylbenzimidazole phosphoribosyltransferase of Ruegeria sp. (strain TM1040) (Silicibacter sp.).